Consider the following 429-residue polypeptide: Transcription factor IIIA (429 aa).

The tract at residues 1–45 is disordered; that stretch reads MGGEVLNNEGMPLAELKQETIPISRSESSESLNSLTSTRSSSSNR. Over residues 24-44 the composition is skewed to low complexity; it reads SRSESSESLNSLTSTRSSSSN. 9 C2H2-type zinc fingers span residues 49-74, 80-102, 108-130, 134-159, 163-186, 194-219, 222-244, 253-277, and 365-389; these read YFCD…LSVH, FQCD…LYTH, FQCS…EVTH, FICP…LSVH, LTCP…SKHH, YQCT…KNDH, LKCP…MIIH, WKCH…GSIH, and YRCF…IDKH. Residues 406 to 416 show a composition bias toward basic and acidic residues; it reads KTLVDQNHKEP. A disordered region spans residues 406–429; the sequence is KTLVDQNHKEPFIIQKETQSAGDK.

The protein resides in the nucleus. Its function is as follows. Interacts with the internal control region (ICR) of approximately 50 bases within the 5S RNA genes, is required for correct transcription of these genes by RNA polymerase III. Also binds the transcribed 5S RNA's. In Saccharomyces cerevisiae (strain ATCC 204508 / S288c) (Baker's yeast), this protein is Transcription factor IIIA (PZF1).